Consider the following 38-residue polypeptide: Mu-agatoxin-Hc1b (38 aa).

Disulfide bonds link Cys-3–Cys-19, Cys-10–Cys-24, Cys-18–Cys-34, and Cys-26–Cys-32. Position 38 is a serine amide (Ser-38).

It belongs to the neurotoxin 07 (Beta/delta-agtx) family. 02 (aga-3) subfamily. In terms of tissue distribution, expressed by the venom gland.

It localises to the secreted. In terms of biological role, insecticidal neurotoxin that induces irreversible neuromuscular blockade in house crickets (A.domesticus). Modifies presynaptic voltage-gated sodium channels (Nav), causing them to open at the normal resting potential of the nerve. This leads to spontaneous release of neurotransmitter and repetitive action potentials in motor neurons. The polypeptide is Mu-agatoxin-Hc1b (Hololena curta (Funnel-web spider)).